A 445-amino-acid polypeptide reads, in one-letter code: Tubulin beta-4 chain (445 aa).

The MREI motif signature appears at 1–4; sequence MREI. 8 residues coordinate GTP: Q11, E69, S138, G142, T143, G144, N204, and N226. E69 lines the Mg(2+) pocket. The segment at 425-445 is disordered; it reads YQDATAEEEGEFEEGEEEENA. The span at 429-445 shows a compositional bias: acidic residues; that stretch reads TAEEEGEFEEGEEEENA. E438 is subject to 5-glutamyl polyglutamate.

Belongs to the tubulin family. Dimer of alpha and beta chains. A typical microtubule is a hollow water-filled tube with an outer diameter of 25 nm and an inner diameter of 15 nM. Alpha-beta heterodimers associate head-to-tail to form protofilaments running lengthwise along the microtubule wall with the beta-tubulin subunit facing the microtubule plus end conferring a structural polarity. Microtubules usually have 13 protofilaments but different protofilament numbers can be found in some organisms and specialized cells. Mg(2+) serves as cofactor. Some glutamate residues at the C-terminus are polyglycylated, resulting in polyglycine chains on the gamma-carboxyl group. Glycylation is mainly limited to tubulin incorporated into axonemes (cilia and flagella) whereas glutamylation is prevalent in neuronal cells, centrioles, axonemes, and the mitotic spindle. Both modifications can coexist on the same protein on adjacent residues, and lowering polyglycylation levels increases polyglutamylation, and reciprocally. The precise function of polyglycylation is still unclear. Post-translationally, some glutamate residues at the C-terminus are polyglutamylated, resulting in polyglutamate chains on the gamma-carboxyl group. Polyglutamylation plays a key role in microtubule severing by spastin (SPAST). SPAST preferentially recognizes and acts on microtubules decorated with short polyglutamate tails: severing activity by SPAST increases as the number of glutamates per tubulin rises from one to eight, but decreases beyond this glutamylation threshold. Preferential expression in germ cells.

The protein resides in the cytoplasm. It localises to the cytoskeleton. Its function is as follows. Tubulin is the major constituent of microtubules, a cylinder consisting of laterally associated linear protofilaments composed of alpha- and beta-tubulin heterodimers. Microtubules grow by the addition of GTP-tubulin dimers to the microtubule end, where a stabilizing cap forms. Below the cap, tubulin dimers are in GDP-bound state, owing to GTPase activity of alpha-tubulin. The protein is Tubulin beta-4 chain (tubb4) of Xenopus laevis (African clawed frog).